A 344-amino-acid chain; its full sequence is Heat-inducible transcription repressor HrcA (344 aa).

This sequence belongs to the HrcA family.

Negative regulator of class I heat shock genes (grpE-dnaK-dnaJ and groELS operons). Prevents heat-shock induction of these operons. The chain is Heat-inducible transcription repressor HrcA from Streptococcus pyogenes serotype M1.